Consider the following 177-residue polypeptide: Adenine phosphoribosyltransferase (177 aa).

It belongs to the purine/pyrimidine phosphoribosyltransferase family. Homodimer.

The protein resides in the cytoplasm. It carries out the reaction AMP + diphosphate = 5-phospho-alpha-D-ribose 1-diphosphate + adenine. The protein operates within purine metabolism; AMP biosynthesis via salvage pathway; AMP from adenine: step 1/1. Catalyzes a salvage reaction resulting in the formation of AMP, that is energically less costly than de novo synthesis. In Chlorobium phaeobacteroides (strain DSM 266 / SMG 266 / 2430), this protein is Adenine phosphoribosyltransferase.